Here is a 669-residue protein sequence, read N- to C-terminus: UvrABC system protein B (669 aa).

The 158-residue stretch at 26–183 folds into the Helicase ATP-binding domain; sequence TNFHAGIAKQ…RHLTELQYTR (158 aa). 39 to 46 lines the ATP pocket; that stretch reads GVTGSGKT. Positions 92-115 match the Beta-hairpin motif; it reads YYDYYQPEAYVPASDTFIEKDSSI. Positions 431–597 constitute a Helicase C-terminal domain; it reads QVDDLISQIN…SVVRPISDIL (167 aa). Residues 631–666 form the UVR domain; sequence AAQMKVLEQKMYQHARDLEFEDAARIRDQIQRLREA.

The protein belongs to the UvrB family. In terms of assembly, forms a heterotetramer with UvrA during the search for lesions. Interacts with UvrC in an incision complex.

The protein localises to the cytoplasm. The UvrABC repair system catalyzes the recognition and processing of DNA lesions. A damage recognition complex composed of 2 UvrA and 2 UvrB subunits scans DNA for abnormalities. Upon binding of the UvrA(2)B(2) complex to a putative damaged site, the DNA wraps around one UvrB monomer. DNA wrap is dependent on ATP binding by UvrB and probably causes local melting of the DNA helix, facilitating insertion of UvrB beta-hairpin between the DNA strands. Then UvrB probes one DNA strand for the presence of a lesion. If a lesion is found the UvrA subunits dissociate and the UvrB-DNA preincision complex is formed. This complex is subsequently bound by UvrC and the second UvrB is released. If no lesion is found, the DNA wraps around the other UvrB subunit that will check the other stand for damage. The protein is UvrABC system protein B of Xylella fastidiosa (strain M23).